We begin with the raw amino-acid sequence, 734 residues long: Photosystem I P700 chlorophyll a apoprotein A2 (734 aa).

Helical transmembrane passes span 46–69 (IFAS…FHVA), 135–158 (LYTG…LHLQ), 175–199 (LNHH…HVAI), 273–291 (IAHH…GHMY), 330–353 (VHFQ…QHMY), 369–395 (AALY…IFFI), 417–439 (AIIS…LYVH), and 517–535 (FLVH…LILV). [4Fe-4S] cluster is bound by residues Cys559 and Cys568. A run of 2 helical transmembrane segments spans residues 575–596 (AFYL…YWHW) and 643–665 (LSVW…MFLI). Chlorophyll a contacts are provided by His654, Met662, and Tyr670. Trp671 is a binding site for phylloquinone. A helical membrane pass occupies residues 707 to 727 (LVGLAHFSVGYIFTYAAFLIA).

It belongs to the PsaA/PsaB family. In terms of assembly, the PsaA/B heterodimer binds the P700 chlorophyll special pair and subsequent electron acceptors. PSI consists of a core antenna complex that captures photons, and an electron transfer chain that converts photonic excitation into a charge separation. The eukaryotic PSI reaction center is composed of at least 11 subunits. The cofactor is P700 is a chlorophyll a/chlorophyll a' dimer, A0 is one or more chlorophyll a, A1 is one or both phylloquinones and FX is a shared 4Fe-4S iron-sulfur center..

It is found in the plastid. Its subcellular location is the chloroplast thylakoid membrane. It catalyses the reaction reduced [plastocyanin] + hnu + oxidized [2Fe-2S]-[ferredoxin] = oxidized [plastocyanin] + reduced [2Fe-2S]-[ferredoxin]. Functionally, psaA and PsaB bind P700, the primary electron donor of photosystem I (PSI), as well as the electron acceptors A0, A1 and FX. PSI is a plastocyanin-ferredoxin oxidoreductase, converting photonic excitation into a charge separation, which transfers an electron from the donor P700 chlorophyll pair to the spectroscopically characterized acceptors A0, A1, FX, FA and FB in turn. Oxidized P700 is reduced on the lumenal side of the thylakoid membrane by plastocyanin. The polypeptide is Photosystem I P700 chlorophyll a apoprotein A2 (Platanus occidentalis (Sycamore)).